A 449-amino-acid chain; its full sequence is uncharacterized protein (449 aa).

A Phosphoserine modification is found at Ser420.

Belongs to the NAD kinase family.

It localises to the cytoplasm. Its subcellular location is the nucleus. This is an uncharacterized protein from Schizosaccharomyces pombe (strain 972 / ATCC 24843) (Fission yeast).